A 101-amino-acid chain; its full sequence is Small ribosomal subunit protein uS14 (101 aa).

The protein belongs to the universal ribosomal protein uS14 family. Part of the 30S ribosomal subunit. Contacts proteins S3 and S10.

Binds 16S rRNA, required for the assembly of 30S particles and may also be responsible for determining the conformation of the 16S rRNA at the A site. This Bartonella quintana (strain Toulouse) (Rochalimaea quintana) protein is Small ribosomal subunit protein uS14.